Reading from the N-terminus, the 215-residue chain is Chaperone protein TorD (215 aa).

It belongs to the TorD/DmsD family. TorD subfamily.

Its subcellular location is the cytoplasm. Involved in the biogenesis of TorA. Acts on TorA before the insertion of the molybdenum cofactor and, as a result, probably favors a conformation of the apoenzyme that is competent for acquiring the cofactor. In Vibrio vulnificus (strain YJ016), this protein is Chaperone protein TorD.